The following is a 151-amino-acid chain: Metalloproteinase inhibitor 3 (151 aa).

The NTR domain occupies 1–108 (CNSDIVIRAK…GLNYRYHLGC (108 aa)). Disulfide bonds link Cys-1-Cys-108, Cys-115-Cys-120, and Cys-128-Cys-149. The segment at 53–54 (ES) is involved in metalloproteinase-binding. Residues 71–151 (GRVYDGKVYT…YQSKHYACIR (81 aa)) form a mediates interaction with EFEMP1 region.

This sequence belongs to the protease inhibitor I35 (TIMP) family. As to quaternary structure, interacts with EFEMP1.

The protein localises to the secreted. The protein resides in the extracellular space. Its subcellular location is the extracellular matrix. Functionally, complexes with metalloproteinases (such as collagenases) and irreversibly inactivates them by binding to their catalytic zinc cofactor. May form part of a tissue-specific acute response to remodeling stimuli. The protein is Metalloproteinase inhibitor 3 (TIMP3) of Oryctolagus cuniculus (Rabbit).